The following is a 499-amino-acid chain: L-arabinose isomerase (499 aa).

4 residues coordinate Mn(2+): E306, E333, H350, and H449.

Belongs to the arabinose isomerase family. Mn(2+) serves as cofactor.

The catalysed reaction is beta-L-arabinopyranose = L-ribulose. The protein operates within carbohydrate degradation; L-arabinose degradation via L-ribulose; D-xylulose 5-phosphate from L-arabinose (bacterial route): step 1/3. Its function is as follows. Catalyzes the conversion of L-arabinose to L-ribulose. The chain is L-arabinose isomerase from Tolumonas auensis (strain DSM 9187 / NBRC 110442 / TA 4).